Consider the following 266-residue polypeptide: Large ribosomal subunit protein eL8 (266 aa).

Positions 104–130 are enriched in basic and acidic residues; sequence PETKQEKKQRLLARAEQKAAGKGDTPT. The tract at residues 104 to 135 is disordered; it reads PETKQEKKQRLLARAEQKAAGKGDTPTKRPPV.

The protein belongs to the eukaryotic ribosomal protein eL8 family. As to quaternary structure, component of the large ribosomal subunit.

The protein resides in the cytoplasm. Component of the large ribosomal subunit. The ribosome is a large ribonucleoprotein complex responsible for the synthesis of proteins in the cell. This is Large ribosomal subunit protein eL8 (RPL7A) from Gallus gallus (Chicken).